The primary structure comprises 226 residues: Ribosomal RNA small subunit methyltransferase G (226 aa).

S-adenosyl-L-methionine is bound by residues Gly83, Phe88, 136 to 137 (IE), and Arg152. Positions 199–226 (FSPSQSDPEGSVLKVRGLHGPDGQPHRR) are disordered.

It belongs to the methyltransferase superfamily. RNA methyltransferase RsmG family.

Its subcellular location is the cytoplasm. The enzyme catalyses guanosine(527) in 16S rRNA + S-adenosyl-L-methionine = N(7)-methylguanosine(527) in 16S rRNA + S-adenosyl-L-homocysteine. Specifically methylates the N7 position of guanine in position 527 of 16S rRNA. The sequence is that of Ribosomal RNA small subunit methyltransferase G from Parvibaculum lavamentivorans (strain DS-1 / DSM 13023 / NCIMB 13966).